We begin with the raw amino-acid sequence, 735 residues long: DNA replication licensing factor mcm5-A (735 aa).

The region spanning 332–538 (IYETVAKSIA…RDMTLAKHVM (207 aa)) is the MCM domain. Arginine 372 contributes to the ADP binding site. The Arginine finger signature appears at 513–516 (SRFD).

Belongs to the MCM family. In terms of assembly, component of the mcm2-7 complex (RLF-M). The complex forms a toroidal hexameric ring with the proposed subunit order mcm2-mcm6-mcm4-mcm7-mcm3-mcm5. The heterodimer of mmcm3/mcm5 interacts with mcm4, mmcm6, mcm7 and weakly with mcm2. Component of the CMG helicase complex, composed of the mcm2-7 complex, the GINS complex and cdc45.

It is found in the nucleus. It localises to the chromosome. The enzyme catalyses ATP + H2O = ADP + phosphate + H(+). Functionally, acts as a component of the MCM2-7 complex (MCM complex) which is the replicative helicase essential for 'once per cell cycle' DNA replication initiation and elongation in eukaryotic cells. Core component of CDC45-MCM-GINS (CMG) helicase, the molecular machine that unwinds template DNA during replication, and around which the replisome is built. The active ATPase sites in the MCM2-7 ring are formed through the interaction surfaces of two neighboring subunits such that a critical structure of a conserved arginine finger motif is provided in trans relative to the ATP-binding site of the Walker A box of the adjacent subunit. The six ATPase active sites, however, are likely to contribute differentially to the complex helicase activity. The sequence is that of DNA replication licensing factor mcm5-A (mcm5-a) from Xenopus laevis (African clawed frog).